Reading from the N-terminus, the 216-residue chain is Thymidine kinase (216 aa).

Residues 9-16 and 86-89 each bind ATP; these read GTMDCGKS and DEAQ. E87 acts as the Proton acceptor in catalysis.

This sequence belongs to the thymidine kinase family. Homotetramer.

It localises to the cytoplasm. It catalyses the reaction thymidine + ATP = dTMP + ADP + H(+). The sequence is that of Thymidine kinase from Streptomyces coelicolor (strain ATCC BAA-471 / A3(2) / M145).